We begin with the raw amino-acid sequence, 197 residues long: Protein shisa-4 (197 aa).

The N-terminal stretch at 1–27 (MPPAGPRGTAPLAAVVLLVLGAPLALA) is a signal peptide. Topologically, residues 28-87 (SEDCLWYLDRNGSWHPGFDCEFFTFCCGTCYQRYCCRDLTLLITERQQKHCLAFSPKTIA) are extracellular. The chain crosses the membrane as a helical span at residues 88–108 (GIASAVILFVAVVATTICCFL). At 109 to 197 (CSCCYLYRRR…MPPQPSYPGA (89 aa)) the chain is on the cytoplasmic side.

It belongs to the shisa family.

It localises to the membrane. The protein is Protein shisa-4 (Shisa4) of Mus musculus (Mouse).